The chain runs to 376 residues: Adipocyte plasma membrane-associated protein (376 aa).

Residues 1-17 (MTFLMLAVSLAIPLLGA) form a helical membrane-spanning segment. N-linked (GlcNAc...) asparagine glycosylation occurs at asparagine 120.

It belongs to the strictosidine synthase family.

It localises to the membrane. Functionally, exhibits strong arylesterase activity with beta-naphthyl acetate and phenyl acetate. May play a role in adipocyte differentiation. The chain is Adipocyte plasma membrane-associated protein (Apmap) from Rattus norvegicus (Rat).